Reading from the N-terminus, the 595-residue chain is CDPK-related kinase 3 (595 aa).

The disordered stretch occupies residues 1 to 131; that stretch reads MGQCYGKVNQ…GTEPEQSLDK (131 aa). Glycine 2 is lipidated: N-myristoyl glycine. Polar residues predominate over residues 20–37; it reads NTTTYVVSGDGNQIQPLT. Residues 111–124 are compositionally biased toward basic and acidic residues; that stretch reads KPKEGPIPEERGTE. In terms of domain architecture, Protein kinase spans 143–405; it reads YELGKEVGRG…AVQALTHPWL (263 aa). ATP-binding positions include 149-157 and lysine 175; that span reads VGRGHFGHT. Aspartate 271 functions as the Proton acceptor in the catalytic mechanism. A Phosphoserine modification is found at serine 311. Position 353 is a phosphoserine; by CPK1 and CPK34 (serine 353). The segment at 409 to 439 is autoinhibitory domain; that stretch reads SRVIPLDILIYKLVKAYLHATPLRRAALKAL. A calmodulin binding (CaMBD) region spans residues 428-448; sequence ATPLRRAALKALAKALTENEL. EF-hand domains are found at residues 446–482, 483–518, 519–558, and 559–588; these read NELVYLRAQFMLLGPNKDGSVSLENFKTALMQNATDA, MRESRVPEILHTMESLAYRKMYFEEFCAAAISIHQL, EAVDAWEEIATAGFQHFETEGNRVITIEELARELNVGASA, and YGHLRDWVRSSDGKLSYLGFTKFLHGVTLR. Asparagine 461, aspartate 463, serine 465, lysine 502, glutamate 507, asparagine 540, glutamate 547, serine 568, aspartate 570, and lysine 572 together coordinate Ca(2+). The residue at position 574 (serine 574) is a Phosphoserine.

It belongs to the protein kinase superfamily. Ser/Thr protein kinase family. CDPK subfamily. Binds calmodulin (CaM) in a calcium-dependent manner. Interacts with GLN1-1. Autophosphorylated. As to expression, ubiquitously expressed with higher levels in siliques and roots, especially at the root cap. Particularly present in vascular bundles of stems and leaves.

The protein localises to the cytoplasm. The protein resides in the membrane. It catalyses the reaction L-seryl-[protein] + ATP = O-phospho-L-seryl-[protein] + ADP + H(+). It carries out the reaction L-threonyl-[protein] + ATP = O-phospho-L-threonyl-[protein] + ADP + H(+). Its activity is regulated as follows. Not activated by calcium. Autophosphorylation may play an important role in the regulation of the kinase activity. Stimulated by magnesium ions (optimum at 10-15 mM) and manganese ions. Its function is as follows. May play a role in signal transduction pathways that involve calcium as a second messenger. Serine/threonine kinase that phosphorylates histone H3 an GLN1-1. The polypeptide is CDPK-related kinase 3 (CRK3) (Arabidopsis thaliana (Mouse-ear cress)).